The primary structure comprises 240 residues: 7-cyano-7-deazaguanine synthase (240 aa).

Residue Phe-9 to Leu-19 participates in ATP binding. Zn(2+) is bound by residues Cys-195, Cys-210, Cys-213, and Cys-216.

Belongs to the QueC family. Zn(2+) is required as a cofactor.

It carries out the reaction 7-carboxy-7-deazaguanine + NH4(+) + ATP = 7-cyano-7-deazaguanine + ADP + phosphate + H2O + H(+). Its pathway is purine metabolism; 7-cyano-7-deazaguanine biosynthesis. Functionally, catalyzes the ATP-dependent conversion of 7-carboxy-7-deazaguanine (CDG) to 7-cyano-7-deazaguanine (preQ(0)). The sequence is that of 7-cyano-7-deazaguanine synthase from Pyrococcus furiosus (strain ATCC 43587 / DSM 3638 / JCM 8422 / Vc1).